The primary structure comprises 1455 residues: DNA polymerase II large subunit (1455 aa).

A disordered region spans residues 1409-1440 (GLLENLSNGSKKTEKAEKAEKPRKKSDEKPKK). A compositionally biased stretch (basic and acidic residues) spans 1419 to 1438 (KKTEKAEKAEKPRKKSDEKP).

It belongs to the archaeal DNA polymerase II family. As to quaternary structure, heterodimer of a large subunit and a small subunit. In terms of processing, this protein undergoes a protein self splicing that involves a post-translational excision of the intervening region (intein) followed by peptide ligation.

It carries out the reaction DNA(n) + a 2'-deoxyribonucleoside 5'-triphosphate = DNA(n+1) + diphosphate. The enzyme catalyses Exonucleolytic cleavage in the 3'- to 5'-direction to yield nucleoside 5'-phosphates.. Its function is as follows. Possesses two activities: a DNA synthesis (polymerase) and an exonucleolytic activity that degrades single-stranded DNA in the 3'- to 5'-direction. Has a template-primer preference which is characteristic of a replicative DNA polymerase. The protein is DNA polymerase II large subunit (polC) of Pyrococcus abyssi (strain GE5 / Orsay).